Consider the following 431-residue polypeptide: MSKIVKVIGREIIDSRGNPTVEAEVHLEGGFVGLAAAPSGASTGSREALELRDGDKSRFLGKGVLKAVAAVNGPIAQAVLGKDAKDQANIDKIMIDLDGTENKSQFGANAILAVSLAAAKAAAASKGMPLYEHIAELNGTPGKFSMPLPMMNIINGGEHADNNVDIQEFMIQPVGAKSLKEAVRIGSEVFHHLAKVLKAKGLNTAVGDEGGYAPNLGSNAEALAVIAEAVKAAGYELGKDVTLAMDCAASEFYKDGKYVLAGEGNKAFTSEEFTHFLEDLTKQYPIVSIEDGLDESDWDGFAYQTKVLGDKIQLVGDDLFVTNTKILKEGIEKGIANSILIKFNQIGSLTETLAAIKMAKDAGYTAVISHRSGETEDATIADLAVGTAAGQIKTGSMSRSDRVAKYNQLIRIEEALGSRAPFNGLKEVKGQ.

Glutamine 167 serves as a coordination point for (2R)-2-phosphoglycerate. The active-site Proton donor is glutamate 209. Residues aspartate 246, glutamate 290, and aspartate 317 each coordinate Mg(2+). Lysine 342, arginine 371, serine 372, and lysine 393 together coordinate (2R)-2-phosphoglycerate. Lysine 342 functions as the Proton acceptor in the catalytic mechanism.

Belongs to the enolase family. As to quaternary structure, component of the RNA degradosome, a multiprotein complex involved in RNA processing and mRNA degradation. Requires Mg(2+) as cofactor.

Its subcellular location is the cytoplasm. It is found in the secreted. The protein localises to the cell surface. The enzyme catalyses (2R)-2-phosphoglycerate = phosphoenolpyruvate + H2O. It functions in the pathway carbohydrate degradation; glycolysis; pyruvate from D-glyceraldehyde 3-phosphate: step 4/5. Its function is as follows. Catalyzes the reversible conversion of 2-phosphoglycerate (2-PG) into phosphoenolpyruvate (PEP). It is essential for the degradation of carbohydrates via glycolysis. This Serratia proteamaculans (strain 568) protein is Enolase.